Reading from the N-terminus, the 338-residue chain is 5-dehydro-2-deoxygluconokinase (338 aa).

This sequence belongs to the carbohydrate kinase PfkB family.

The catalysed reaction is 5-dehydro-2-deoxy-D-gluconate + ATP = 6-phospho-5-dehydro-2-deoxy-D-gluconate + ADP + H(+). Its pathway is polyol metabolism; myo-inositol degradation into acetyl-CoA; acetyl-CoA from myo-inositol: step 5/7. In terms of biological role, catalyzes the phosphorylation of 5-dehydro-2-deoxy-D-gluconate (2-deoxy-5-keto-D-gluconate or DKG) to 6-phospho-5-dehydro-2-deoxy-D-gluconate (DKGP). This Mesomycoplasma hyopneumoniae (strain 7448) (Mycoplasma hyopneumoniae) protein is 5-dehydro-2-deoxygluconokinase.